We begin with the raw amino-acid sequence, 174 residues long: UPF0316 protein Dhaf_3052 (174 aa).

Helical transmembrane passes span 4 to 24, 35 to 55, and 59 to 79; these read ILQFVLIIITINITYVTLTTI, VYASLLSVLEVFIYIMGLSII, and LDSYWNIAAYCCGYGVGVYLG.

This sequence belongs to the UPF0316 family.

The protein resides in the cell membrane. The protein is UPF0316 protein Dhaf_3052 of Desulfitobacterium hafniense (strain DSM 10664 / DCB-2).